The primary structure comprises 415 residues: MKVLGLIVEYNPFHNGHLYHLEESKKISGADFVVCVMSGNFIQRGEPAIVNKWARTKMALSAGADLVIELPLSCAMASAEYFASGAVRILNDIGIVDYICFGSEHGDVKTLDYIAQILVEEPESYKSFLKEELDNGLSYPAARESALKKYTAHSINIPQIISSSNNILGIEYLKALRRIKSSIIPLTIKRINNDYNTENITGSISSASSIRKYISTSNSTSFDDVLAMTMPKTSVDILFEEFSAGRGPVFKEDFYPVVTSLIRKMTPEQIRNFAYVSEGLENRIKSAADTAGTYEELVESICTRRYTKTRVQRILMGILMGVTSKDLDMLSRFDSPQYARILGFNSKGKQLLSQIKKKSSIPLVLKLSDFIKSCDPVLKRKLELEILATDLYVMCYKNPAFRKAGQEFTQNIIIM.

ATP is bound by residues 7–20, glycine 102, asparagine 165, and 190–191; these read IVEY…HLYH and RI.

This sequence belongs to the TmcAL family.

Its subcellular location is the cytoplasm. The enzyme catalyses cytidine(34) in elongator tRNA(Met) + acetate + ATP = N(4)-acetylcytidine(34) in elongator tRNA(Met) + AMP + diphosphate. In terms of biological role, catalyzes the formation of N(4)-acetylcytidine (ac(4)C) at the wobble position of elongator tRNA(Met), using acetate and ATP as substrates. First activates an acetate ion to form acetyladenylate (Ac-AMP) and then transfers the acetyl group to tRNA to form ac(4)C34. This Acetivibrio thermocellus (strain ATCC 27405 / DSM 1237 / JCM 9322 / NBRC 103400 / NCIMB 10682 / NRRL B-4536 / VPI 7372) (Clostridium thermocellum) protein is tRNA(Met) cytidine acetate ligase.